A 298-amino-acid polypeptide reads, in one-letter code: ATP synthase gamma chain (298 aa).

The protein belongs to the ATPase gamma chain family. In terms of assembly, F-type ATPases have 2 components, CF(1) - the catalytic core - and CF(0) - the membrane proton channel. CF(1) has five subunits: alpha(3), beta(3), gamma(1), delta(1), epsilon(1). CF(0) has three main subunits: a, b and c.

The protein resides in the cell inner membrane. Its function is as follows. Produces ATP from ADP in the presence of a proton gradient across the membrane. The gamma chain is believed to be important in regulating ATPase activity and the flow of protons through the CF(0) complex. This chain is ATP synthase gamma chain, found in Desulforapulum autotrophicum (strain ATCC 43914 / DSM 3382 / VKM B-1955 / HRM2) (Desulfobacterium autotrophicum).